The primary structure comprises 203 residues: Small ribosomal subunit protein uS7A (203 aa).

It belongs to the universal ribosomal protein uS7 family. In terms of assembly, component of the small ribosomal subunit (SSU). Mature yeast ribosomes consist of a small (40S) and a large (60S) subunit. The 40S small subunit contains 1 molecule of ribosomal RNA (18S rRNA) and at least 33 different proteins. The large 60S subunit contains 3 rRNA molecules (25S, 5.8S and 5S rRNA) and at least 46 different proteins.

The protein resides in the cytoplasm. It localises to the nucleus. Its subcellular location is the nucleolus. Its function is as follows. Component of the ribosome, a large ribonucleoprotein complex responsible for the synthesis of proteins in the cell. The small ribosomal subunit (SSU) binds messenger RNAs (mRNAs) and translates the encoded message by selecting cognate aminoacyl-transfer RNA (tRNA) molecules. The large subunit (LSU) contains the ribosomal catalytic site termed the peptidyl transferase center (PTC), which catalyzes the formation of peptide bonds, thereby polymerizing the amino acids delivered by tRNAs into a polypeptide chain. The nascent polypeptides leave the ribosome through a tunnel in the LSU and interact with protein factors that function in enzymatic processing, targeting, and the membrane insertion of nascent chains at the exit of the ribosomal tunnel. This chain is Small ribosomal subunit protein uS7A (rps5), found in Schizosaccharomyces pombe (strain 972 / ATCC 24843) (Fission yeast).